The chain runs to 487 residues: MQKSWLVLLVACLGLQGTTALTLHRRDLPAVVSLDIKRNNAVDPVARDRMRRKRDKTVEQNLDNEETLYFCNITLGTPKQSLRLVLDTGSSDLWCNAANSTLCSSRDQPCNASGSYDPSSSSSYAYTSSDFNISYADGTGAAGDYVTDTIHIGGATVKDFQFGVGYSSSSAEGVLGIGYTTNEVQVGRLGKSAYANLPQAMVKNGLIQSNAYSLWLNDLGADTGSILFGGVNTEKYHGELQTLPIQTVNGVYSEFIIALTGVSLSSASSHHNYSSSDALPAAVLLDSGSSLTYLPNSIVQDIYDDLGVTYESSSGVGYVPCSLAQQNINVTYTFSSPIITVGIDELVLDAGDLRFRNGARACIFGIVPAGDSTAVLGDTFLRSAYVVYDLSNNEISLANTKFNSTKDNILEIGTGDDSVPGATQVSNPVTSVVADGSGARIGGPTGEIFTDIPSATSSGGAAAPAGPTDVPKHLVLGAAAIGYVLAF.

The signal sequence occupies residues 1–20; the sequence is MQKSWLVLLVACLGLQGTTA. The Peptidase A1 domain maps to 69–398; it reads YFCNITLGTP…DLSNNEISLA (330 aa). The N-linked (GlcNAc...) asparagine glycan is linked to asparagine 72. The active site involves aspartate 87. N-linked (GlcNAc...) asparagine glycosylation is found at asparagine 99, asparagine 111, asparagine 132, and asparagine 272. Aspartate 286 is an active-site residue. Asparagine 329 and asparagine 403 each carry an N-linked (GlcNAc...) asparagine glycan. Alanine 463 carries GPI-anchor amidated alanine lipidation. The propeptide at 464 to 487 is removed in mature form; that stretch reads PAGPTDVPKHLVLGAAAIGYVLAF.

It belongs to the peptidase A1 family.

It is found in the cell membrane. In terms of biological role, probable GPI-anchored aspartic-type endopeptidase. In Aspergillus oryzae (strain ATCC 42149 / RIB 40) (Yellow koji mold), this protein is Probable aspartic-type endopeptidase opsB (opsB).